The primary structure comprises 561 residues: Arginine--tRNA ligase (561 aa).

Residues 128–138 carry the 'HIGH' region motif; the sequence is ANPTGPLHVGH.

It belongs to the class-I aminoacyl-tRNA synthetase family. Monomer.

The protein resides in the cytoplasm. The enzyme catalyses tRNA(Arg) + L-arginine + ATP = L-arginyl-tRNA(Arg) + AMP + diphosphate. The polypeptide is Arginine--tRNA ligase (Chromohalobacter salexigens (strain ATCC BAA-138 / DSM 3043 / CIP 106854 / NCIMB 13768 / 1H11)).